The chain runs to 284 residues: L-ribulose-5-phosphate 3-epimerase UlaE (284 aa).

Belongs to the L-ribulose-5-phosphate 3-epimerase family.

The catalysed reaction is L-ribulose 5-phosphate = L-xylulose 5-phosphate. It functions in the pathway cofactor degradation; L-ascorbate degradation; D-xylulose 5-phosphate from L-ascorbate: step 3/4. In terms of biological role, catalyzes the isomerization of L-xylulose-5-phosphate to L-ribulose-5-phosphate. Is involved in the anaerobic L-ascorbate utilization. The polypeptide is L-ribulose-5-phosphate 3-epimerase UlaE (Escherichia coli (strain ATCC 8739 / DSM 1576 / NBRC 3972 / NCIMB 8545 / WDCM 00012 / Crooks)).